The sequence spans 123 residues: Protein Rev (123 aa).

S5 carries the phosphoserine; by host CK2 modification. The interval 18-26 (IIKTLYQSN) is homomultimerization. Disordered stretches follow at residues 24-50 (QSNP…ARQR) and 79-123 (EGLS…GTKE). A Nuclear localization signal and RNA-binding (RRE) motif is present at residues 34 to 50 (TRQARKNRRRRWRARQR). Positions 36 to 50 (QARKNRRRRWRARQR) are enriched in basic residues. A Nuclear export signal and binding to XPO1 motif is present at residues 73–84 (FQLPPLEGLSLD). S92 is modified (phosphoserine; by host). Positions 93-105 (GTQQPQGTETGVG) are enriched in low complexity.

It belongs to the HIV-1 REV protein family. As to quaternary structure, homomultimer; when bound to the RRE. Multimeric assembly is essential for activity and may involve XPO1. Binds to human KPNB1, XPO1, TNPO1, RANBP5 and IPO7. Interacts with the viral Integrase. Interacts with human KHDRBS1. Interacts with human NAP1; this interaction decreases Rev multimerization and stimulates its activity. Interacts with human DEAD-box helicases DDX3 and DDX24; these interactions may serve for viral RNA export to the cytoplasm and packaging, respectively. Interacts with human PSIP1; this interaction may inhibit HIV-1 DNA integration by promoting dissociation of the Integrase-LEDGF/p75 complex. In terms of processing, asymmetrically arginine dimethylated at one site by host PRMT6. Methylation impairs the RNA-binding activity and export of viral RNA from the nucleus to the cytoplasm. Phosphorylated by protein kinase CK2. Presence of, and maybe binding to the N-terminus of the regulatory beta subunit of CK2 is necessary for CK2-mediated Rev's phosphorylation.

The protein resides in the host nucleus. Its subcellular location is the host nucleolus. The protein localises to the host cytoplasm. Escorts unspliced or incompletely spliced viral pre-mRNAs (late transcripts) out of the nucleus of infected cells. These pre-mRNAs carry a recognition sequence called Rev responsive element (RRE) located in the env gene, that is not present in fully spliced viral mRNAs (early transcripts). This function is essential since most viral proteins are translated from unspliced or partially spliced pre-mRNAs which cannot exit the nucleus by the pathway used by fully processed cellular mRNAs. Rev itself is translated from a fully spliced mRNA that readily exits the nucleus. Rev's nuclear localization signal (NLS) binds directly to KPNB1/Importin beta-1 without previous binding to KPNA1/Importin alpha-1. KPNB1 binds to the GDP bound form of RAN (Ran-GDP) and targets Rev to the nucleus. In the nucleus, the conversion from Ran-GDP to Ran-GTP dissociates Rev from KPNB1 and allows Rev's binding to the RRE in viral pre-mRNAs. Rev multimerization on the RRE via cooperative assembly exposes its nuclear export signal (NES) to the surface. Rev can then form a complex with XPO1/CRM1 and Ran-GTP, leading to nuclear export of the complex. Conversion from Ran-GTP to Ran-GDP mediates dissociation of the Rev/RRE/XPO1/RAN complex, so that Rev can return to the nucleus for a subsequent round of export. Beside KPNB1, also seems to interact with TNPO1/Transportin-1, RANBP5/IPO5 and IPO7/RANBP7 for nuclear import. The nucleoporin-like HRB/RIP is an essential cofactor that probably indirectly interacts with Rev to release HIV RNAs from the perinuclear region to the cytoplasm. The chain is Protein Rev from Human immunodeficiency virus type 1 group M subtype G (isolate 92NG083) (HIV-1).